Reading from the N-terminus, the 100-residue chain is Large ribosomal subunit protein uL23 (100 aa).

The protein belongs to the universal ribosomal protein uL23 family. Part of the 50S ribosomal subunit. Contacts protein L29, and trigger factor when it is bound to the ribosome.

In terms of biological role, one of the early assembly proteins it binds 23S rRNA. One of the proteins that surrounds the polypeptide exit tunnel on the outside of the ribosome. Forms the main docking site for trigger factor binding to the ribosome. The protein is Large ribosomal subunit protein uL23 of Shewanella sp. (strain MR-4).